The primary structure comprises 479 residues: Adenosylhomocysteinase (479 aa).

Residues Thr-65, Asp-144, and Glu-204 each contribute to the substrate site. 205 to 207 (TTT) is a binding site for NAD(+). The substrate site is built by Lys-234 and Asp-238. Residues Asn-239, 268–273 (GYGDVG), Glu-291, Asn-326, 347–349 (IGH), and Asn-392 contribute to the NAD(+) site.

This sequence belongs to the adenosylhomocysteinase family. It depends on NAD(+) as a cofactor.

The protein resides in the cytoplasm. The catalysed reaction is S-adenosyl-L-homocysteine + H2O = L-homocysteine + adenosine. It participates in amino-acid biosynthesis; L-homocysteine biosynthesis; L-homocysteine from S-adenosyl-L-homocysteine: step 1/1. Its function is as follows. May play a key role in the regulation of the intracellular concentration of adenosylhomocysteine. In Variovorax paradoxus (strain S110), this protein is Adenosylhomocysteinase.